Consider the following 111-residue polypeptide: Rubredoxin (111 aa).

The region spanning 11–62 (LDRFECRSCGYVYEPEKGDSKHDIAPETPFAELPINWRCPVCTAKKAAFSNI) is the Rubredoxin-like domain. C16, C19, C49, and C52 together coordinate Fe cation.

Belongs to the rubredoxin family. It depends on Fe(3+) as a cofactor.

In terms of biological role, rubredoxin is a small nonheme, iron protein lacking acid-labile sulfide. Its single Fe, chelated to 4 Cys, functions as an electron acceptor and may also stabilize the conformation of the molecule. Could be involved in hydrogenase-linked redox processes. This Trichormus variabilis (strain ATCC 29413 / PCC 7937) (Anabaena variabilis) protein is Rubredoxin (rub).